A 119-amino-acid chain; its full sequence is MNNEICEITCIHEDKVNRAKSKLANFDTPSVSGFFKILSDENRLKIVHALVHEDELCVCDIANIIDASVATTSHHLNSLKKLGVVDSHKDGKLVYYFIKNIKILNLMELGVNFKEEVLA.

Residues C6, C10, C57, and C59 each coordinate Cd(2+). The HTH arsR-type domain maps to 23-118; the sequence is LANFDTPSVS…LGVNFKEEVL (96 aa). Positions 58 to 77 form a DNA-binding region, H-T-H motif; the sequence is VCDIANIIDASVATTSHHLN.

Homodimer.

In terms of biological role, metal-binding repressor for the cad operon. Involved in resistance to heavy metals, such as cadmium, bismuth, zinc or lead. Metal binding causes the repressor to dissociate from the DNA. The chain is Cadmium resistance transcriptional regulatory protein CadC (cadC) from Lactococcus lactis subsp. lactis (Streptococcus lactis).